We begin with the raw amino-acid sequence, 150 residues long: UPF0756 membrane protein Dd1591_2981 (150 aa).

Transmembrane regions (helical) follow at residues 10–32, 51–71, 88–108, and 127–147; these read ILLA…AILF, YGLS…IASG, LMAV…VVLM, and ALFR…SLLI.

Belongs to the UPF0756 family.

Its subcellular location is the cell membrane. This Dickeya chrysanthemi (strain Ech1591) (Dickeya zeae (strain Ech1591)) protein is UPF0756 membrane protein Dd1591_2981.